The primary structure comprises 273 residues: MFKHTKMLQHPAKPDRPDPLFAKKMQEILGGQFGEISVAMQYLFQGWNTRGNEKYKDLLMDTATEELGHVEMIATMIARLLEDAPLDQQEKAAEDPVIGSILGGMNPHHAIVSGLGAMPESSTGVPWSGGYIVASGNLLADFRANLNAESQGRLQVARLFEMTDDKGVKDMLSFLLARDTMHQNQWLAAIKELEAQEGPVVPGTFPKALEKQEFSHQLINFSEGEESAKQNWLNEKAPDGEAFEYVKEAKTFGEKPELKPAPPCVHNTLPGRE.

Glutamate 35 is a Mn(2+) binding site. The Ca(2+) site is built by aspartate 57 and aspartate 61. The Mn(2+) site is built by glutamate 66, histidine 69, glutamate 149, and histidine 182. The Ca(2+) site is built by asparagine 220, serine 222, and glycine 224. Residues glutamate 254 to glutamate 273 form a disordered region.

This sequence belongs to the manganese catalase family. In terms of assembly, homohexamer. It depends on Ca(2+) as a cofactor. Mn(2+) serves as cofactor.

It catalyses the reaction 2 H2O2 = O2 + 2 H2O. Inhibited in the presence of EDTA. Resistant to inhibition by sodium azide. Catalyzes the decomposition of hydrogen peroxide into water and oxygen. No significant activity could be detected with any of the other tested substrates, including glutathione, pyrogallol, NADH, NADPH and o-dianisidine. The chain is Manganese catalase from Bacillus subtilis.